Reading from the N-terminus, the 432-residue chain is GRAM domain-containing protein 2B (432 aa).

Residue M1 is modified to N-acetylmethionine. 2 disordered regions span residues 1 to 61 and 74 to 106; these read MTEL…SPDQ and DGAS…SSQY. Composition is skewed to basic and acidic residues over residues 9 to 39 and 81 to 99; these read EDTK…EEKK and DKND…ERKK. Positions 110–177 constitute a GRAM domain; that stretch reads MHFHKLFLSV…FSVTLIKKTK (68 aa). Polar residues predominate over residues 220 to 233; the sequence is TSVGNSPNPSSAEN. A disordered region spans residues 220–239; it reads TSVGNSPNPSSAENSFRADR. A phosphoserine mark is found at S225, S242, and S252. Residues 262 to 285 form a disordered region; it reads RQDMEGYSSSGSQTPESENSRDFH. A compositionally biased stretch (polar residues) spans 268–278; it reads YSSSGSQTPES.

This chain is GRAM domain-containing protein 2B (GRAMD2B), found in Homo sapiens (Human).